The primary structure comprises 214 residues: Ribonuclease S-2 (214 aa).

The N-terminal stretch at 1–22 (MSKSQLTSVFFILLCALSPIYG) is a signal peptide. Cysteines 38 and 43 form a disulfide. The N-linked (GlcNAc...) asparagine glycan is linked to N49. The active-site Proton donor is H53. H53 serves as a coordination point for RNA. N-linked (GlcNAc...) asparagine glycosylation is present at N59. Residues C67 and C116 are joined by a disulfide bond. RNA contacts are provided by residues 91 to 92 (DL), K94, and F105. The active site involves E109. Residue 112 to 113 (KH) participates in RNA binding. Catalysis depends on H113, which acts as the Proton acceptor. N160 is a glycosylation site (N-linked (GlcNAc...) asparagine). Disulfide bonds link C175–C204 and C187–C198.

This sequence belongs to the RNase T2 family.

The protein localises to the secreted. It is found in the extracellular space. The catalysed reaction is a ribonucleotidyl-ribonucleotide-RNA + H2O = a 3'-end 3'-phospho-ribonucleotide-RNA + a 5'-end dephospho-ribonucleoside-RNA + H(+). Functionally, self-incompatibility (SI) is the inherited ability of a flowering plant to prevent self-fertilization by discriminating between self and non-self pollen during pollination. In many species of the Solanaceae, self-incompatibility is controlled by the single, multiallelic locus S. This stylar glycoprotein is associated with expression of self-incompatibility in potato. The polypeptide is Ribonuclease S-2 (S-2) (Nicotiana alata (Winged tobacco)).